Here is a 512-residue protein sequence, read N- to C-terminus: Monocarboxylate transporter 14 (512 aa).

At 1-29 the chain is on the cytoplasmic side; that stretch reads MYTSHEDIGYDLEDDRKAKNKKTLKPHPD. Transmembrane regions (helical) follow at residues 30-50, 76-96, 105-125, 129-149, 161-181, 193-211, 317-337, 355-375, 381-401, 410-430, 446-466, and 476-496; these read IDGGWAWMMVLSSFFVHILIM, WVSSLSMGITLIVGPFIGLFI, AIIGGLVNSLGWVLSAYAANV, FITFGVAAGLGSGMAYLPAVV, LAQGLSTTGTGFGTFLMTVLL, AMFIQGALSLNLCVCGALM, MFVAFIFWALFAYSSFVIPFI, FPLTSIIAILHIFGKVILGAV, ISVWNVFLIANFTLVLSIFLL, LAVICALIGFSSGYFSLMPVV, IIICANGISALLGPPFAGWIF, and FYICGLLYMVGILFLLIQPCI. Residues 497 to 512 lie on the Cytoplasmic side of the membrane; the sequence is QMIDQSRRKCIEGAHV.

Belongs to the major facilitator superfamily. Monocarboxylate porter (TC 2.A.1.13) family.

It localises to the cell membrane. Its function is as follows. Proton-linked monocarboxylate transporter. May catalyze the transport of monocarboxylates across the plasma membrane. This Mus musculus (Mouse) protein is Monocarboxylate transporter 14 (Slc16a14).